The following is a 119-amino-acid chain: Large ribosomal subunit protein bL20 (119 aa).

This sequence belongs to the bacterial ribosomal protein bL20 family.

Functionally, binds directly to 23S ribosomal RNA and is necessary for the in vitro assembly process of the 50S ribosomal subunit. It is not involved in the protein synthesizing functions of that subunit. This Shewanella halifaxensis (strain HAW-EB4) protein is Large ribosomal subunit protein bL20.